We begin with the raw amino-acid sequence, 465 residues long: Ribulose bisphosphate carboxylase large chain (465 aa).

Position 4 is an N6,N6,N6-trimethyllysine (Lys-4). Positions 113 and 163 each coordinate substrate. The Proton acceptor role is filled by Lys-165. Position 167 (Lys-167) interacts with substrate. The Mg(2+) site is built by Lys-191, Asp-193, and Glu-194. Position 191 is an N6-carboxylysine (Lys-191). His-284 functions as the Proton acceptor in the catalytic mechanism. 3 residues coordinate substrate: Arg-285, His-317, and Ser-369.

This sequence belongs to the RuBisCO large chain family. Type I subfamily. In terms of assembly, heterohexadecamer of 8 large chains and 8 small chains; disulfide-linked. The disulfide link is formed within the large subunit homodimers. Requires Mg(2+) as cofactor. The disulfide bond which can form in the large chain dimeric partners within the hexadecamer appears to be associated with oxidative stress and protein turnover.

It localises to the plastid. Its subcellular location is the chloroplast. It catalyses the reaction 2 (2R)-3-phosphoglycerate + 2 H(+) = D-ribulose 1,5-bisphosphate + CO2 + H2O. The catalysed reaction is D-ribulose 1,5-bisphosphate + O2 = 2-phosphoglycolate + (2R)-3-phosphoglycerate + 2 H(+). In terms of biological role, ruBisCO catalyzes two reactions: the carboxylation of D-ribulose 1,5-bisphosphate, the primary event in carbon dioxide fixation, as well as the oxidative fragmentation of the pentose substrate in the photorespiration process. Both reactions occur simultaneously and in competition at the same active site. In Securidaca diversifolia (Easter flower), this protein is Ribulose bisphosphate carboxylase large chain.